The chain runs to 462 residues: Gamma-aminobutyric acid receptor subunit alpha-5 (462 aa).

Residues 1–31 form the signal peptide; that stretch reads MDNGMFSSFIMIKNLLLFCISMNLASHFGFS. The Extracellular segment spans residues 32–260; it reads QMPTSSVKAE…FHLKRKIGYF (229 aa). An N-linked (GlcNAc...) asparagine glycan is attached at N45. R101 contributes to the 4-aminobutanoate binding site. N-linked (GlcNAc...) asparagine glycosylation is present at N145. T164 is a binding site for 4-aminobutanoate. Residues C173 and C187 are joined by a disulfide bond. N-linked (GlcNAc...) asparagine glycosylation is found at N207 and N236. 3 helical membrane passes run 261-281, 287-308, and 319-340; these read VIQT…SFWL, PART…ISAR, and AMDW…EFAT. Over 341 to 427 the chain is Cytoplasmic; the sequence is VNYFTKRGWA…TYNSISKIDK (87 aa). K355 is covalently cross-linked (Glycyl lysine isopeptide (Lys-Gly) (interchain with G-Cter in ubiquitin)). The segment at 375-412 is disordered; sequence TNAYTTGKMTHPPNIPKEQTPAGTTNASSASVKPEDKA. Residues 395–405 show a composition bias toward polar residues; the sequence is PAGTTNASSAS. A helical transmembrane segment spans residues 428–448; sequence MSRIIFPLLFGTFNLVYWATY.

This sequence belongs to the ligand-gated ion channel (TC 1.A.9) family. Gamma-aminobutyric acid receptor (TC 1.A.9.5) subfamily. GABRA5 sub-subfamily. In terms of assembly, heteropentamer, formed by a combination of alpha (GABRA1-6), beta (GABRB1-3), gamma (GABRG1-3), delta (GABRD), epsilon (GABRE), rho (GABRR1-3), pi (GABRP) and theta (GABRQ) chains, each subunit exhibiting distinct physiological and pharmacological properties.

It is found in the postsynaptic cell membrane. The protein localises to the cell membrane. The catalysed reaction is chloride(in) = chloride(out). Alpha subunit of the heteropentameric ligand-gated chloride channel gated by gamma-aminobutyric acid (GABA), a major inhibitory neurotransmitter in the brain. GABA-gated chloride channels, also named GABA(A) receptors (GABAAR), consist of five subunits arranged around a central pore and contain GABA active binding site(s) located at the alpha and beta subunit interface(s). When activated by GABA, GABAARs selectively allow the flow of chloride anions across the cell membrane down their electrochemical gradient. GABAARs containing alpha-5/GABRA5 subunits are mainly extrasynaptic and contribute to the tonic GABAergic inhibition in the hippocampus. Extrasynaptic alpha-5-containing GABAARs in CA1 pyramidal neurons play a role in learning and memory processes. The chain is Gamma-aminobutyric acid receptor subunit alpha-5 (GABRA5) from Bos taurus (Bovine).